The following is a 150-amino-acid chain: Large ribosomal subunit protein bL17 (150 aa).

The disordered stretch occupies residues 126 to 150 (DRAKRREERLKAQREGRDHEEETDE).

This sequence belongs to the bacterial ribosomal protein bL17 family. As to quaternary structure, part of the 50S ribosomal subunit. Contacts protein L32.

The protein is Large ribosomal subunit protein bL17 of Solibacter usitatus (strain Ellin6076).